A 232-amino-acid chain; its full sequence is Ureidoacrylate amidohydrolase RutB (232 aa).

The Proton acceptor role is filled by aspartate 26. Lysine 135 is a catalytic residue. Cysteine 168 acts as the Nucleophile in catalysis.

This sequence belongs to the isochorismatase family. RutB subfamily.

It carries out the reaction (Z)-3-ureidoacrylate + H2O + H(+) = (Z)-3-aminoacrylate + NH4(+) + CO2. The catalysed reaction is (Z)-3-ureidoacrylate + H2O = (Z)-3-aminoacrylate + carbamate + H(+). The enzyme catalyses (Z)-2-methylureidoacrylate + H2O + H(+) = (Z)-2-methylaminoacrylate + NH4(+) + CO2. In terms of biological role, hydrolyzes ureidoacrylate to form aminoacrylate and carbamate. The carbamate hydrolyzes spontaneously, thereby releasing one of the nitrogen atoms of the pyrimidine ring as ammonia and one of its carbon atoms as CO2. The sequence is that of Ureidoacrylate amidohydrolase RutB from Cronobacter turicensis (strain DSM 18703 / CCUG 55852 / LMG 23827 / z3032).